Consider the following 732-residue polypeptide: Exonuclease 1 (732 aa).

The tract at residues 1 to 99 (MGITGLIPFV…KRRRDSRKQS (99 aa)) is N-domain. Aspartate 30, aspartate 78, glutamate 150, aspartate 152, aspartate 171, aspartate 173, and aspartate 226 together coordinate Mg(2+). The segment at 138 to 230 (RSRNVDCIVA…ILSGCDYLDS (93 aa)) is I-domain. Disordered regions lie at residues 422–471 (YSFK…QRSP), 524–625 (DEQT…TNST), and 661–716 (SCSS…VSQN). 2 positions are modified to phosphoserine: serine 431 and serine 433. A compositionally biased stretch (basic and acidic residues) spans 432 to 442 (PSREDSVDQER). At threonine 443 the chain carries Phosphothreonine. Serine 447 is modified (phosphoserine). Composition is skewed to basic and acidic residues over residues 457–467 (FAKERTGEEAN) and 525–537 (EQTR…LRDT). 2 stretches are compositionally biased toward polar residues: residues 572–593 (RCSS…SLLE) and 608–625 (DLNN…TNST). The segment covering 661-677 (SCSSDQRASSTSSSSQQ) has biased composition (low complexity). The segment covering 703-716 (KSRTNGKLGAVSQN) has biased composition (polar residues).

This sequence belongs to the XPG/RAD2 endonuclease family. EXO1 subfamily. It depends on Mg(2+) as a cofactor. Specifically expressed in the female germline.

It localises to the nucleus. Functionally, 5'-&gt;3' double-stranded DNA exonuclease which may also contain a cryptic 3'-&gt;5' double-stranded DNA exonuclease activity. Also exhibits endonuclease activity against 5'-overhanging flap structures similar to those generated by displacement synthesis when DNA polymerase encounters the 5'-end of a downstream Okazaki fragment. Required for DNA mismatch repair (MMR). The sequence is that of Exonuclease 1 (tos) from Drosophila melanogaster (Fruit fly).